The chain runs to 256 residues: Protein FixA (256 aa).

This sequence belongs to the ETF beta-subunit/FixA family. Heterodimer of FixA and FixB.

Its pathway is amine and polyamine metabolism; carnitine metabolism. Required for anaerobic carnitine reduction. May bring reductant to CaiA. In Escherichia coli O6:H1 (strain CFT073 / ATCC 700928 / UPEC), this protein is Protein FixA.